The sequence spans 411 residues: LIM domain-binding protein 1 (411 aa).

Serine 2 carries the N-acetylserine modification. Residue threonine 61 is modified to Phosphothreonine. Phosphoserine is present on residues serine 265 and serine 302. 2 disordered regions span residues 284–330 and 367–411; these read PPAE…TFAL and DAAN…QASQ. The segment covering 302-318 has biased composition (low complexity); that stretch reads SGGSTMSSGGGNTNNSN. The region spanning 336–375 is the LIM interaction domain (LID) domain; the sequence is DVMVVGEPTLMGGEFGDEDERLITRLENTQFDAANGIDDE.

The protein belongs to the LDB family. As to quaternary structure, interacts with ESR1. Forms homodimers and heterodimers. Interacts with and activates LHX1/LIM1. Interacts with the LIM domains of ISL1 and LMO2. Can assemble in a complex with LMO2 and TAL1/SCL but does not interact with TAL1/SCL directly. Strongly interacts with the LIM2 domain of LMX1A and more weakly with the LIM1 domain. Homodimerization is not required for, and does not effect, LMX1A-binding. Component of a nuclear TAL-1 complex composed at least of CBFA2T3, LDB1, TAL1 and TCF3. Interacts with LHX6 and LHX9. At neuronal promoters, forms a complex with LHX3 involved in the specification of interneurons, in motor neurons, it is displaced by ISL1 to form a ternary complex in which ISL1 contacts both LHX3 and LDB1. Interacts with SLK; leading to negatively regulate SLK kinase activity. Interacts with YWHAZ. Interacts with PRDM1/BLIMP1. Interacts with LMO4. Interacts with RLIM/RNF12; the interaction inhibits the ubiquitination of LMO proteins. Ubiquitinated by RLIM/RNF12, leading to its degradation by the proteasome. In terms of tissue distribution, expressed in multiple adult tissues including heart, brain, liver, kidney, testis, lung and muscle, with expression highest in the pituitary gland and skin.

Its subcellular location is the nucleus. Functionally, binds to the LIM domain of a wide variety of LIM domain-containing transcription factors. May regulate the transcriptional activity of LIM-containing proteins by determining specific partner interactions. Plays a role in the development of interneurons and motor neurons in cooperation with LHX3 and ISL1. Acts synergistically with LHX1/LIM1 in axis formation and activation of gene expression. Acts with LMO2 in the regulation of red blood cell development, maintaining erythroid precursors in an immature state. The chain is LIM domain-binding protein 1 (Ldb1) from Mus musculus (Mouse).